Reading from the N-terminus, the 157-residue chain is Probable succinate transporter subunit YjjB (157 aa).

A run of 4 helical transmembrane segments spans residues 8-28 (FALAQDMILAAIPAVGFAMVF), 50-70 (MILMTSGLNIEWSTFMASMLV), 87-107 (VFTVAAVIPMFPGISAYTAMI), and 129-149 (FLTASSIVGALSIGLSIPGLW).

Belongs to the ThrE exporter (TC 2.A.79) family. In terms of assembly, the transporter is composed of YjjB and YjjP.

It is found in the cell inner membrane. Involved in succinate export with YjjP. Both proteins are required for export. This chain is Probable succinate transporter subunit YjjB, found in Escherichia coli (strain SE11).